A 361-amino-acid polypeptide reads, in one-letter code: Septin-2 (361 aa).

Y17 carries the post-translational modification Phosphotyrosine. The 273-residue stretch at K34–R306 folds into the Septin-type G domain. A G1 motif region spans residues G44–S51. GTP-binding positions include G44–T52, T78, G104, and K183–T186. Residues D101–G104 are G3 motif. Residues A182–D185 form a G4 motif region. N6-acetyllysine is present on K190. A Phosphotyrosine modification is found at Y211. S218 is subject to Phosphoserine. GTP is bound by residues G241, R256, and Y258. The tract at residues W260–H270 is important for dimerization.

It belongs to the TRAFAC class TrmE-Era-EngA-EngB-Septin-like GTPase superfamily. Septin GTPase family. As to quaternary structure, septins polymerize into heterooligomeric protein complexes that form filaments, and associate with cellular membranes, actin filaments and microtubules. GTPase activity is required for filament formation. Septin filaments are assembled from asymmetrical heterotrimers, composed of SEPTIN2, SEPTIN6 and SEPTIN7 that associate head-to-head to form a hexameric unit. Interaction between SEPTIN2 and SEPTIN7 seems indirect. Also interacts with SEPTIN9 and SEPTIN5. Interaction with SEPTIN4 not detected. Component of a septin core octameric complex consisting of SEPTIN12, SEPTIN7, SEPTIN6 and SEPTIN2 or SEPTIN4 in the order 12-7-6-2-2-6-7-12 or 12-7-6-4-4-6-7-12 and located in the sperm annulus. Interacts with MAP4. Interacts with DZIP1L. In terms of tissue distribution, widely expressed.

The protein localises to the cytoplasm. Its subcellular location is the cytoskeleton. It is found in the spindle. The protein resides in the chromosome. It localises to the centromere. The protein localises to the kinetochore. Its subcellular location is the cleavage furrow. It is found in the midbody. The protein resides in the cell cortex. It localises to the cell projection. The protein localises to the cilium membrane. Its subcellular location is the cilium. It is found in the flagellum. Filament-forming cytoskeletal GTPase. Forms a filamentous structure with SEPTIN12, SEPTIN6, SEPTIN2 and probably SEPTIN4 at the sperm annulus which is required for the structural integrity and motility of the sperm tail during postmeiotic differentiation. Required for normal organization of the actin cytoskeleton. Plays a role in the biogenesis of polarized columnar-shaped epithelium by maintaining polyglutamylated microtubules, thus facilitating efficient vesicle transport, and by impeding MAP4 binding to tubulin. Required for the progression through mitosis. Forms a scaffold at the midplane of the mitotic splindle required to maintain CENPE localization at kinetochores and consequently chromosome congression. During anaphase, may be required for chromosome segregation and spindle elongation. Plays a role in ciliogenesis and collective cell movements. In cilia, required for the integrity of the diffusion barrier at the base of the primary cilium that prevents diffusion of transmembrane proteins between the cilia and plasma membranes: probably acts by regulating the assembly of the tectonic-like complex (also named B9 complex) by localizing TMEM231 protein. The sequence is that of Septin-2 from Mus musculus (Mouse).